The chain runs to 484 residues: tRNA sulfurtransferase (484 aa).

In terms of domain architecture, THUMP spans 63 to 167 (DVFADRLACI…QDKLYMVERR (105 aa)). ATP is bound by residues 185–186 (LI), lysine 267, glycine 289, and glutamine 298. Cysteine 346 and cysteine 458 are joined by a disulfide. One can recognise a Rhodanese domain in the interval 406–484 (VASGEIIIDV…GYTNVKVYRP (79 aa)). Cysteine 458 (cysteine persulfide intermediate) is an active-site residue.

It belongs to the ThiI family.

Its subcellular location is the cytoplasm. It carries out the reaction [ThiI sulfur-carrier protein]-S-sulfanyl-L-cysteine + a uridine in tRNA + 2 reduced [2Fe-2S]-[ferredoxin] + ATP + H(+) = [ThiI sulfur-carrier protein]-L-cysteine + a 4-thiouridine in tRNA + 2 oxidized [2Fe-2S]-[ferredoxin] + AMP + diphosphate. It catalyses the reaction [ThiS sulfur-carrier protein]-C-terminal Gly-Gly-AMP + S-sulfanyl-L-cysteinyl-[cysteine desulfurase] + AH2 = [ThiS sulfur-carrier protein]-C-terminal-Gly-aminoethanethioate + L-cysteinyl-[cysteine desulfurase] + A + AMP + 2 H(+). The protein operates within cofactor biosynthesis; thiamine diphosphate biosynthesis. In terms of biological role, catalyzes the ATP-dependent transfer of a sulfur to tRNA to produce 4-thiouridine in position 8 of tRNAs, which functions as a near-UV photosensor. Also catalyzes the transfer of sulfur to the sulfur carrier protein ThiS, forming ThiS-thiocarboxylate. This is a step in the synthesis of thiazole, in the thiamine biosynthesis pathway. The sulfur is donated as persulfide by IscS. In Shewanella frigidimarina (strain NCIMB 400), this protein is tRNA sulfurtransferase.